Consider the following 156-residue polypeptide: Movement protein P17 (156 aa).

A homodimerization region spans residues 38-54; it reads AEDAEEEAIAAQEELEF. 2 disordered regions span residues 55–80 and 131–156; these read PEDE…EVSP and AKYH…IKRG. Residues 57–156 are RNA-binding; sequence DEAQARHSCL…RAAPKLIKRG (100 aa). A phosphoserine mark is found at Ser71, Ser79, Ser137, and Ser140. Residues 144-156 show a composition bias toward basic residues; it reads KLRRAAPKLIKRG.

It belongs to the polerovirus movement protein family. In terms of assembly, homodimer. Heterodimer with movement protein P3a. In terms of processing, expressed as a nonphosphorylated 20kDa form and a phosphorylated 22kDa form. Phosphorylated by a host PKC-related kinase. Serine phosphorylation is required for plamodesma targeting.

The protein resides in the host cell junction. The protein localises to the host plasmodesma. It is found in the host mitochondrion outer membrane. It localises to the host Golgi apparatus. Its subcellular location is the host chloroplast envelope. In terms of biological role, together with movement protein P3a, facilitates long-distance movement of virions in host. Transports viral genome to neighboring plant cells directly through plasmosdesmata, without any budding. The movement protein allows efficient cell to cell propagation, by bypassing the host cell wall barrier. Binds ssRNA. The chain is Movement protein P17 from Solanum tuberosum (Potato).